The chain runs to 185 residues: MGKLFEEKTIKTEQIFSGRVVKLQVDDVELPNGQTSKREIVRHPGAVAVIAITNENKIVMVEQYRKPLEKSIVEIPAGKLEKGEDPRVTALRELEEETGYECEQMEWLISFATSPGFADEIIHLYVAKGLSKKENAAGLDEDEFVDLIELTLDEALQYIKEKRIYDSKTVIAVQYLQLQEALKHK.

This sequence belongs to the Nudix hydrolase family. In terms of assembly, homodimer. The cofactor is Mg(2+).

Involved in the activation of the NAD-dependent methanol dehydrogenase (MDH). MDH activation by Act involves hydrolytic removal of the nicotinamide mononucleotide (NMN) moiety of the NAD cofactor, changing its ping-pong type of reaction mechanism into a ternary complex reaction mechanism. It requires the presence of magnesium ions and is also able to use ADP-ribose. The sequence is that of Methanol dehydrogenase activator from Bacillus methanolicus.